A 242-amino-acid chain; its full sequence is Host range factor p28 (242 aa).

The KilA-N domain occupies 21–131; it reads YIDEPNDIRL…QSILRGLVNW (111 aa). The segment at 173 to 226 adopts an RING-type zinc-finger fold; that stretch reads CGICYEVVYSKRLENDRYFGLLDSCNHIFCITCINIWHRTRRETGASDNCPICR.

The protein belongs to the orthopoxvirus OPG021 family.

It is found in the host cytoplasm. The enzyme catalyses S-ubiquitinyl-[E2 ubiquitin-conjugating enzyme]-L-cysteine + [acceptor protein]-L-lysine = [E2 ubiquitin-conjugating enzyme]-L-cysteine + N(6)-ubiquitinyl-[acceptor protein]-L-lysine.. RING-finger E3 ubiquitin ligase which catalyzes the formation of both 'Lys-48'- and 'Lys-63'-linked polyubiquitin chains. Plays an important role in virulence by acting as an anti-apoptotic factor. This chain is Host range factor p28 (OPG021), found in Bos taurus (Bovine).